The chain runs to 362 residues: Formyltransferase/hydrolase complex Fhc subunit B (362 aa).

In terms of assembly, octaheteromer. Part of the formyltransferase/hydrolase complex fhc; composed of FhcA, FhcB, FhcC and FhcD.

The protein resides in the cytoplasm. The protein operates within one-carbon metabolism; formaldehyde degradation; formate from formaldehyde (H(4)MPT route): step 4/5. In terms of biological role, involved in the transformation of 5-formyl tetrahydromethanopterin (5-formyl-H(4)MPT) to methanofuran (MFR) and formate via the formylmethanofuran (formyl-MFR). In Methylorubrum extorquens (strain ATCC 14718 / DSM 1338 / JCM 2805 / NCIMB 9133 / AM1) (Methylobacterium extorquens), this protein is Formyltransferase/hydrolase complex Fhc subunit B (fhcB).